The following is a 999-amino-acid chain: Multiple C2 and transmembrane domain-containing protein 1 (999 aa).

A compositionally biased stretch (low complexity) spans 1 to 19 (MEPRAAAAGEPEPPAASSS). A disordered region spans residues 1–241 (MEPRAAAAGE…TGEEHGSSQK (241 aa)). Residues 34 to 44 (RSKGGGGGRAG) are compositionally biased toward gly residues. The span at 65 to 79 (GNAPARGSGAGSRWS) shows a compositional bias: low complexity. Over residues 92–101 (FSSSQPNLCC) the composition is skewed to polar residues. 2 stretches are compositionally biased toward low complexity: residues 131–141 (PAVKGPAAASG) and 149–169 (GGRS…LSSS). Basic and acidic residues-rich tracts occupy residues 175–185 (RGDRARDEGAR) and 228–238 (RAPETGEEHGS). 3 C2 domains span residues 242 to 360 (IINT…DVTL), 452 to 569 (QTQS…KLEL), and 603 to 724 (QKER…AYVL). Ca(2+) is bound by residues D277, D283, D330, D332, D338, D486, D492, D539, D541, D547, D642, D648, D694, D696, and D702. 2 consecutive transmembrane segments (helical) span residues 811-831 (FVLF…LVLL) and 914-934 (PFLS…LYCI).

The protein belongs to the MCTP family. Ca(2+) serves as cofactor.

It is found in the cytoplasmic vesicle. Its subcellular location is the secretory vesicle. It localises to the synaptic vesicle membrane. The protein localises to the recycling endosome. The protein resides in the endoplasmic reticulum membrane. Functionally, calcium sensor which is essential for the stabilization of normal baseline neurotransmitter release and for the induction and long-term maintenance of presynaptic homeostatic plasticity. This Homo sapiens (Human) protein is Multiple C2 and transmembrane domain-containing protein 1 (MCTP1).